Here is a 510-residue protein sequence, read N- to C-terminus: Bifunctional purine biosynthesis protein PurH (510 aa).

Residues 1–144 (MSKRALISVT…KNYKDVIVVV (144 aa)) enclose the MGS-like domain.

This sequence belongs to the PurH family.

The catalysed reaction is (6R)-10-formyltetrahydrofolate + 5-amino-1-(5-phospho-beta-D-ribosyl)imidazole-4-carboxamide = 5-formamido-1-(5-phospho-D-ribosyl)imidazole-4-carboxamide + (6S)-5,6,7,8-tetrahydrofolate. It catalyses the reaction IMP + H2O = 5-formamido-1-(5-phospho-D-ribosyl)imidazole-4-carboxamide. The protein operates within purine metabolism; IMP biosynthesis via de novo pathway; 5-formamido-1-(5-phospho-D-ribosyl)imidazole-4-carboxamide from 5-amino-1-(5-phospho-D-ribosyl)imidazole-4-carboxamide (10-formyl THF route): step 1/1. It participates in purine metabolism; IMP biosynthesis via de novo pathway; IMP from 5-formamido-1-(5-phospho-D-ribosyl)imidazole-4-carboxamide: step 1/1. This Clostridioides difficile (strain 630) (Peptoclostridium difficile) protein is Bifunctional purine biosynthesis protein PurH.